A 376-amino-acid chain; its full sequence is Nuclear hormone receptor family member nhr-124 (376 aa).

Positions 11-89 (PNICAICHQK…LGMRYHNSSE (79 aa)) form a DNA-binding region, nuclear receptor. 2 NR C4-type zinc fingers span residues 14 to 34 (CAICHQKAFGYNYEVVSCNAC) and 50 to 72 (CKKGGKCFDGDDLLTSRPKCRSC). The NR LBD domain occupies 125–371 (HLHALNETRY…FSKILTEACR (247 aa)).

The protein belongs to the nuclear hormone receptor family.

It localises to the nucleus. In terms of biological role, orphan nuclear receptor. This is Nuclear hormone receptor family member nhr-124 (nhr-124) from Caenorhabditis elegans.